We begin with the raw amino-acid sequence, 238 residues long: HTH-type transcriptional regulator TreR (238 aa).

One can recognise an HTH gntR-type domain in the interval 1-71; it reads MKVNKFITIY…RGKGSVVLNR (71 aa). The H-T-H motif DNA-binding region spans 31–50; the sequence is EHELTAQYGTSRETVRKALH.

In terms of assembly, dimer of dimers.

Repressor for the trePA operon. It is able to bind trehalose-6-phosphate. The chain is HTH-type transcriptional regulator TreR (treR) from Bacillus subtilis (strain 168).